Here is a 356-residue protein sequence, read N- to C-terminus: Nucleosome assembly protein 1;4 (356 aa).

Residues 34-88 (VNALKNKLQNLAGQHSDILETLTPQVRKRVDVLRELQSQHDELESHFFEERAALE) are a coiled coil. The Nuclear export signal motif lies at 55–70 (LTPQVRKRVDVLRELQ). Residues 230 to 235 (KKKPKK) carry the Nuclear localization signal motif. Positions 304–356 (FTGEAAEGDEFEDIEDDDDDDDDDDDEDDEDEEDEDDEEEEKSKKKSSALKVE) are disordered. Residues 309 to 343 (AEGDEFEDIEDDDDDDDDDDDEDDEDEEDEDDEEE) are compositionally biased toward acidic residues. Residues 347-356 (KKKSSALKVE) are compositionally biased toward basic residues.

This sequence belongs to the nucleosome assembly protein (NAP) family. Can form homomeric and heteromeric protein complexes with NAP1;3. Binds histones H2A and H2B in vivo. Also able to bind histones H1 and H4 in vitro. Interacts with CYCB1;1 and with alpha tubulin.

The protein resides in the nucleus. Its subcellular location is the cytoplasm. In terms of biological role, may modulate chromatin structure by regulation of nucleosome assembly/disassembly. Could function together with B-type cyclins in the regulation of microtubule dynamics. In Nicotiana tabacum (Common tobacco), this protein is Nucleosome assembly protein 1;4 (NAP1;4).